Here is a 151-residue protein sequence, read N- to C-terminus: Transcriptional regulator MraZ (151 aa).

SpoVT-AbrB domains follow at residues 5 to 52 (ANAV…PLDE) and 81 to 124 (AVDL…DEDA).

The protein belongs to the MraZ family. Forms oligomers.

It is found in the cytoplasm. Its subcellular location is the nucleoid. This Pseudomonas putida (strain ATCC 700007 / DSM 6899 / JCM 31910 / BCRC 17059 / LMG 24140 / F1) protein is Transcriptional regulator MraZ.